A 432-amino-acid chain; its full sequence is D-amino acid dehydrogenase (432 aa).

3–17 (VLVLGSGVIGTTTAY) contributes to the FAD binding site.

Belongs to the DadA oxidoreductase family. Requires FAD as cofactor.

The enzyme catalyses a D-alpha-amino acid + A + H2O = a 2-oxocarboxylate + AH2 + NH4(+). It functions in the pathway amino-acid degradation; D-alanine degradation; NH(3) and pyruvate from D-alanine: step 1/1. Functionally, oxidative deamination of D-amino acids. The chain is D-amino acid dehydrogenase from Azotobacter vinelandii (strain DJ / ATCC BAA-1303).